Here is a 376-residue protein sequence, read N- to C-terminus: Putative MSV199 domain-containing protein 468L (376 aa).

Residues 178–261 (QKREKETMSR…VNTVQKKLDI (84 aa)) are a coiled coil.

This Invertebrate iridescent virus 6 (IIV-6) protein is Putative MSV199 domain-containing protein 468L.